A 638-amino-acid polypeptide reads, in one-letter code: Terrein cluster-specific transcription factor terR (638 aa).

The zn(2)-C6 fungal-type DNA-binding region spans 50–76; the sequence is CDMCKSKKVRCDGGTPCSYCNLHDLRC.

The protein localises to the nucleus. Transcription factor that regulates specifically the terrein biosynthesis gene cluster. Recognizes CGG direct repeat consensus sequences in the terrein cluster forming the high affinity consensus motif TCGGHHWYHCGGH. The sequence is that of Terrein cluster-specific transcription factor terR from Aspergillus terreus (strain NIH 2624 / FGSC A1156).